The following is a 214-amino-acid chain: Thiamine import ATP-binding protein ThiQ (214 aa).

Residues 2-212 (IKLNTIFDYP…KNGQATEREI (211 aa)) enclose the ABC transporter domain. 31-38 (GESGAGKS) is a binding site for ATP.

It belongs to the ABC transporter superfamily. Thiamine importer (TC 3.A.1.19.1) family. In terms of assembly, the complex is composed of two ATP-binding proteins (ThiQ), two transmembrane proteins (ThiP) and a solute-binding protein (ThiB).

It localises to the cell inner membrane. It catalyses the reaction thiamine(out) + ATP + H2O = thiamine(in) + ADP + phosphate + H(+). Its function is as follows. Part of the ABC transporter complex ThiBPQ involved in thiamine import. Responsible for energy coupling to the transport system. The chain is Thiamine import ATP-binding protein ThiQ from Histophilus somni (strain 129Pt) (Haemophilus somnus).